Consider the following 349-residue polypeptide: Holliday junction branch migration complex subunit RuvB (349 aa).

The interval methionine 1 to tyrosine 186 is large ATPase domain (RuvB-L). Residues leucine 25, arginine 26, glycine 67, lysine 70, threonine 71, serine 72, glutamate 133–phenylalanine 135, arginine 176, tyrosine 186, and arginine 223 contribute to the ATP site. Threonine 71 is a Mg(2+) binding site. The tract at residues glutamate 187–aspartate 257 is small ATPAse domain (RuvB-S). A head domain (RuvB-H) region spans residues glutamate 260 to serine 349. The DNA site is built by arginine 315 and arginine 320.

This sequence belongs to the RuvB family. In terms of assembly, homohexamer. Forms an RuvA(8)-RuvB(12)-Holliday junction (HJ) complex. HJ DNA is sandwiched between 2 RuvA tetramers; dsDNA enters through RuvA and exits via RuvB. An RuvB hexamer assembles on each DNA strand where it exits the tetramer. Each RuvB hexamer is contacted by two RuvA subunits (via domain III) on 2 adjacent RuvB subunits; this complex drives branch migration. In the full resolvosome a probable DNA-RuvA(4)-RuvB(12)-RuvC(2) complex forms which resolves the HJ.

The protein localises to the cytoplasm. It carries out the reaction ATP + H2O = ADP + phosphate + H(+). The RuvA-RuvB-RuvC complex processes Holliday junction (HJ) DNA during genetic recombination and DNA repair, while the RuvA-RuvB complex plays an important role in the rescue of blocked DNA replication forks via replication fork reversal (RFR). RuvA specifically binds to HJ cruciform DNA, conferring on it an open structure. The RuvB hexamer acts as an ATP-dependent pump, pulling dsDNA into and through the RuvAB complex. RuvB forms 2 homohexamers on either side of HJ DNA bound by 1 or 2 RuvA tetramers; 4 subunits per hexamer contact DNA at a time. Coordinated motions by a converter formed by DNA-disengaged RuvB subunits stimulates ATP hydrolysis and nucleotide exchange. Immobilization of the converter enables RuvB to convert the ATP-contained energy into a lever motion, pulling 2 nucleotides of DNA out of the RuvA tetramer per ATP hydrolyzed, thus driving DNA branch migration. The RuvB motors rotate together with the DNA substrate, which together with the progressing nucleotide cycle form the mechanistic basis for DNA recombination by continuous HJ branch migration. Branch migration allows RuvC to scan DNA until it finds its consensus sequence, where it cleaves and resolves cruciform DNA. This is Holliday junction branch migration complex subunit RuvB from Mycobacterium leprae (strain Br4923).